Consider the following 305-residue polypeptide: Olfactory receptor 9G1 (305 aa).

Residues 1-24 (MQRSNHTVTEFILLGFTTDPGMQL) are Extracellular-facing. N-linked (GlcNAc...) asparagine glycosylation occurs at Asn5. Residues 25 to 45 (GLFVVFLGVYSLTVVGNSTLI) form a helical membrane-spanning segment. The Cytoplasmic portion of the chain corresponds to 46–53 (VLICNDSC). Residues 54-74 (LHTPMYFFTGNLSFLDLWYSS) traverse the membrane as a helical segment. Residues 75 to 98 (VYTPKILVTCISEDKSISFAGCLC) lie on the Extracellular side of the membrane. Cys96 and Cys188 are oxidised to a cystine. Residues 99–119 (QFFFSAGLAYSECYLLAAVAY) traverse the membrane as a helical segment. Residues 120 to 138 (DRYVAISKPLLYAQAMSIK) are Cytoplasmic-facing. Residues 139-159 (LCALLVAVSYCGGFINSSIIT) traverse the membrane as a helical segment. Residues 160 to 196 (KKTFSFNFCRENIIDDFFCDLLPLVELACGEKGGYKI) are Extracellular-facing. The helical transmembrane segment at 197–216 (MMYFLLASNVICPAVLILAS) threads the bilayer. The Cytoplasmic portion of the chain corresponds to 217-236 (YLFIITSVLRISSSKGYLKA). Residues 237-257 (FSTCSSHLTSVTLYYGSILYI) form a helical membrane-spanning segment. The Extracellular segment spans residues 258–270 (YALPRSSYSFDMD). A helical transmembrane segment spans residues 271 to 291 (KIVSTFYTVVFPMLNLMIYSL). Over 292–305 (RNKDVKEALKKLLP) the chain is Cytoplasmic.

This sequence belongs to the G-protein coupled receptor 1 family.

The protein resides in the cell membrane. Its function is as follows. Odorant receptor. The chain is Olfactory receptor 9G1 (OR9G1) from Homo sapiens (Human).